A 122-amino-acid chain; its full sequence is Flagellar protein FliT (122 aa).

A required for homodimerization region spans residues 1–50; that stretch reads MTSTVEFINRWQRIALLSQSLLELAQRGEWELLLQQEVSYLQSIETVMEK. The interval 60-98 is fliD binding; the sequence is IQDMVAGYIKQTLDNEQRLKGLLQQRLDELSGLIGQSTR.

The protein belongs to the FliT family. As to quaternary structure, homodimer. Interacts with FliD and FlhC.

Its subcellular location is the cytoplasm. It localises to the cytosol. Functionally, dual-function protein that regulates the transcription of class 2 flagellar operons and that also acts as an export chaperone for the filament-capping protein FliD. As a transcriptional regulator, acts as an anti-FlhDC factor; it directly binds FlhC, thus inhibiting the binding of the FlhC/FlhD complex to class 2 promoters, resulting in decreased expression of class 2 flagellar operons. As a chaperone, effects FliD transition to the membrane by preventing its premature polymerization, and by directing it to the export apparatus. In Salmonella arizonae (strain ATCC BAA-731 / CDC346-86 / RSK2980), this protein is Flagellar protein FliT.